Here is a 601-residue protein sequence, read N- to C-terminus: Beta-phellandrene synthase (601 aa).

The N-terminal 35 residues, 1–35, are a transit peptide targeting the chloroplast; it reads MSTISIHHVGILRNPLPSKNKRALINNPWSLSLPR. The Mn(2+) site is built by aspartate 356 and aspartate 360. Positions 356 to 360 match the DDXXD motif motif; that stretch reads DDVYD. Homodimerization regions lie at residues 362 to 368 and 434 to 471; these read YGTLDEL and EAEW…LSIP. Positions 499 and 507 each coordinate Mn(2+).

This sequence belongs to the terpene synthase family. As to quaternary structure, homodimer. Requires Mn(2+) as cofactor. Mg(2+) is required as a cofactor. As to expression, expressed in peltate glandular trichomes. Present at low levels in flowers and stems.

It is found in the plastid. The protein resides in the chloroplast. It carries out the reaction (2E)-geranyl diphosphate = beta-phellandrene + diphosphate. It catalyses the reaction (2E)-geranyl diphosphate = (1R,5R)-sabinene + diphosphate. The protein operates within secondary metabolite biosynthesis; terpenoid biosynthesis. Its function is as follows. Involved in the biosynthesis of phenolic monoterpenes natural products. Monoterpene synthase that catalyzes mainly the formation of olefins such as sabinene and beta-phellandrene, and minor amounts of other monoterpenes (e.g. myrcene, gamma-terpinene, alpha-thujene and alpha-pinene) from geranyl diphosphate (GPP). The chain is Beta-phellandrene synthase from Origanum vulgare (Wild marjoram).